Consider the following 290-residue polypeptide: Arylamine N-acetyltransferase 2 (290 aa).

Cys68 serves as the catalytic Acyl-thioester intermediate. CoA-binding residues include Ser103 and Gly104. Ile106–His107 is a substrate binding site. Residues His107 and Asp122 contribute to the active site. Position 208 (Tyr208) interacts with CoA.

The protein belongs to the arylamine N-acetyltransferase family.

Its subcellular location is the cytoplasm. The catalysed reaction is an arylamine + acetyl-CoA = an N-acetylarylamine + CoA. The enzyme catalyses an N-hydroxyarylamine + acetyl-CoA = an N-acetoxyarylamine + CoA. Functionally, catalyzes the N- or O-acetylation of various arylamine and heterocyclic amine substrates, and participates in the detoxification of a plethora of hydrazine and arylamine drugs. The polypeptide is Arylamine N-acetyltransferase 2 (Nat2) (Mus musculus (Mouse)).